The chain runs to 139 residues: Large ribosomal subunit protein uL16c (139 aa).

Belongs to the universal ribosomal protein uL16 family. Part of the 50S ribosomal subunit.

It is found in the plastid. The protein resides in the chloroplast. This Cicer arietinum (Chickpea) protein is Large ribosomal subunit protein uL16c.